The sequence spans 274 residues: Large ribosomal subunit protein uL2cz/uL2cy (274 aa).

Disordered regions lie at residues 1–25 (MAIH…VKSN) and 224–274 (NPVD…RRSK).

Belongs to the universal ribosomal protein uL2 family. As to quaternary structure, part of the 50S ribosomal subunit.

It localises to the plastid. The protein resides in the chloroplast. The chain is Large ribosomal subunit protein uL2cz/uL2cy (rpl2-A) from Cucumis sativus (Cucumber).